The following is a 192-amino-acid chain: dTTP/UTP pyrophosphatase (192 aa).

D72 serves as the catalytic Proton acceptor.

Belongs to the Maf family. YhdE subfamily. Requires a divalent metal cation as cofactor.

It is found in the cytoplasm. The catalysed reaction is dTTP + H2O = dTMP + diphosphate + H(+). It catalyses the reaction UTP + H2O = UMP + diphosphate + H(+). In terms of biological role, nucleoside triphosphate pyrophosphatase that hydrolyzes dTTP and UTP. May have a dual role in cell division arrest and in preventing the incorporation of modified nucleotides into cellular nucleic acids. The chain is dTTP/UTP pyrophosphatase from Hydrogenovibrio crunogenus (strain DSM 25203 / XCL-2) (Thiomicrospira crunogena).